The following is a 246-amino-acid chain: Bis(5'-nucleosyl)-tetraphosphatase PrpE [asymmetrical] (246 aa).

It belongs to the PrpE family. The cofactor is Ni(2+).

It catalyses the reaction P(1),P(4)-bis(5'-guanosyl) tetraphosphate + H2O = GMP + GTP + 2 H(+). Its function is as follows. Asymmetrically hydrolyzes Ap4p to yield AMP and ATP. The sequence is that of Bis(5'-nucleosyl)-tetraphosphatase PrpE [asymmetrical] from Halalkalibacterium halodurans (strain ATCC BAA-125 / DSM 18197 / FERM 7344 / JCM 9153 / C-125) (Bacillus halodurans).